The following is a 228-amino-acid chain: HTH-type transcriptional regulator ArcR (228 aa).

22–141 (SYINIPVGVL…VKLFSLLSET (120 aa)) is a binding site for a nucleoside 3',5'-cyclic phosphate. An HTH crp-type domain is found at 155–228 (KLAKERVTKI…SKNWLVSKDL (74 aa)). Positions 188 to 207 (IQLLSDMAGISRETTSHIIN) form a DNA-binding region, H-T-H motif.

Its subcellular location is the cytoplasm. Positively regulates the expression of the arcABDCR operon under anaerobic conditions, thus playing an essential role in arginine catabolism. May also control the expression of genes encoding proteins which are involved in anaerobic metabolism. Can bind cyclic AMP. This chain is HTH-type transcriptional regulator ArcR (arcR), found in Staphylococcus epidermidis (strain ATCC 12228 / FDA PCI 1200).